Here is a 186-residue protein sequence, read N- to C-terminus: Putative 3-methyladenine DNA glycosylase (186 aa).

Belongs to the DNA glycosylase MPG family.

The polypeptide is Putative 3-methyladenine DNA glycosylase (Borreliella burgdorferi (strain ATCC 35210 / DSM 4680 / CIP 102532 / B31) (Borrelia burgdorferi)).